Consider the following 117-residue polypeptide: Large ribosomal subunit protein bL17 (117 aa).

The protein belongs to the bacterial ribosomal protein bL17 family. Part of the 50S ribosomal subunit. Contacts protein L32.

In Endomicrobium trichonymphae, this protein is Large ribosomal subunit protein bL17.